A 1304-amino-acid polypeptide reads, in one-letter code: Splicing factor 3B subunit 1 (1304 aa).

Disordered stretches follow at residues 100-119 (QYDPFAEHRPPKIADREDEY) and 124-148 (RTMIISPERLDPFADGGKTPDPKMN). A compositionally biased stretch (basic and acidic residues) spans 104–119 (FAEHRPPKIADREDEY). Threonine 125 is modified (phosphothreonine). Residue serine 129 is modified to Phosphoserine. An N6-acetyllysine modification is found at lysine 141. Position 142 is a phosphothreonine (threonine 142). Arginine 157 carries the citrulline modification. The segment at 173-360 (AEKAKAGELK…PVLTPGKTPI (188 aa)) is disordered. A U2AF homology region; mediates interaction with RBM39 region spans residues 190–342 (SQPPSKRKRR…KRKSRWDETP (153 aa)). Serine 194 bears the Phosphoserine mark. Phosphothreonine is present on residues threonine 203, threonine 207, and threonine 211. Lysine 214 bears the N6-acetyllysine; alternate mark. Lysine 214 is covalently cross-linked (Glycyl lysine isopeptide (Lys-Gly) (interchain with G-Cter in SUMO2); alternate). Residues threonine 223 and threonine 227 each carry the phosphothreonine modification. The tract at residues 223 to 491 (TPGHTPSLRW…VDESTLSPEE (269 aa)) is interaction with PPP1R8. Position 229 is a phosphoserine (serine 229). Basic and acidic residues predominate over residues 231–241 (RWDETPGRAKG). Residues threonine 235, threonine 244, threonine 248, threonine 257, threonine 261, threonine 267, threonine 273, and threonine 278 each carry the phosphothreonine modification. Serine 287 is modified (phosphoserine). Residues 291–304 (NRWDETPKTERDTP) show a composition bias toward basic and acidic residues. 4 positions are modified to phosphothreonine: threonine 296, threonine 299, threonine 303, and threonine 313. At serine 322 the chain carries Phosphoserine. Residues threonine 326 and threonine 328 each carry the phosphothreonine modification. Phosphoserine is present on serine 332. Threonine 341 carries the phosphothreonine modification. Residues 342–352 (PASQMGGSTPV) show a composition bias toward polar residues. Serine 344 and serine 349 each carry phosphoserine. 2 positions are modified to phosphothreonine: threonine 350 and threonine 354. Serine 400 is modified (phosphoserine). A Glycyl lysine isopeptide (Lys-Gly) (interchain with G-Cter in SUMO2); alternate cross-link involves residue lysine 413. Residue lysine 413 forms a Glycyl lysine isopeptide (Lys-Gly) (interchain with G-Cter in SUMO1); alternate linkage. Threonine 426 is subject to Phosphothreonine. Lysine 430 participates in a covalent cross-link: Glycyl lysine isopeptide (Lys-Gly) (interchain with G-Cter in SUMO2). A Phosphothreonine; by DYRK1A modification is found at threonine 434. Threonine 436 is modified (phosphothreonine). Position 488 is a phosphoserine (serine 488). HEAT repeat units follow at residues 529-568 (GPLFNQILPLLMSPTLEDQERHLLVKVIDRILYKLDDLVR), 569-603 (PYVHKILVVIEPLLIDEDYYARVEGREIISNLAKA), 604-641 (AGLATMISTMRPDIDNMDEYVRNTTARAFAVVASALGI), 643-677 (SLLPFLKAVCKSKKSWQARHTGIKIVQQIAILMGC), 680-718 (LPHLRSLVEIIEHGLVDEQQKVRTISALAIAALAEAATP), 763-801 (NYYTREVMLILIREFQSPDEEMKKIVLKVVKQCCGTDGV), 843-881 (KVGAAEIISRIVDDLKDEAEQYRKMVMETIEKIMGNLGA), 1010-1048 (TPPIKDLLPRLTPILKNRHEKVQENCIDLVGRIADRGAE), 1052-1090 (AREWMRICFELLELLKAHKKAIRRATVNTFGYIAKAIGP), 1122-1160 (TCSPFTVLPALMNEYRVPELNVQNGVLKSLSFLFEYIGE), and 1163-1201 (KDYIYAVTPLLEDALMDRDLVHRQTASAVVQHMSLGVYG). Residues 529–568 (GPLFNQILPLLMSPTLEDQERHLLVKVIDRILYKLDDLVR) form an interaction with SF3B14 region. Positions 547-550 (QERH) are interaction with PHF5A. Lysine 554 and lysine 562 each carry N6-acetyllysine. The segment at 1156–1157 (EY) is interaction with PHF5A. The interaction with SF3B3 and SF3B5 stretch occupies residues 1248 to 1304 (QYCLQGLFHPARKVRDVYWKIYNSIYIGSQDALIAHYPRIYNDDKNTYIRYELDYIL).

Belongs to the SF3B1 family. In terms of assembly, component of the 17S U2 SnRNP complex, a ribonucleoprotein complex that contains small nuclear RNA (snRNA) U2 and a number of specific proteins. Part of the SF3B subcomplex of the 17S U2 SnRNP complex. SF3B associates with the splicing subcomplex SF3A and a 12S RNA unit to form the U2 small nuclear ribonucleoproteins complex (U2 snRNP). Within the SF3B complex, interacts directly (via HEAT domain) with SF3B3, SF3B5, SF3B6 and (via HEAT domain) with PHF5A. The SF3B subcomplex interacts with U2AF2. Identified in the spliceosome C complex. Component of the minor (U12-type spliceosome) spliceosome. Within the minor spliceosome complex, interacts with SCNM1 and CRIPT. Component of the B-WICH complex, at least composed of SMARCA5/SNF2H, BAZ1B/WSTF, SF3B1, DEK, MYO1C, ERCC6, MYBBP1A and DDX21. Phosphorylated form interacts with PPP1R8. Interacts with PQBP1. Interacts with RBM17. Interacts with RBM39. Interacts with SETX. Interacts with RBM15. Interacts with USH1G. Interacts with SDE2. Interacts with U2AF1. Interacts with CACTIN. Interacts with ZRSR1. Interacts with CYREN. Phosphorylated. Phosphorylation occurs concomitantly with the splicing catalytic steps. Phosphorylation on Thr-244, Thr-248 and Thr-313 by cyclin-dependent kinases promotes interaction with PPP1R8 during mitosis. Post-translationally, citrullinated by PADI4.

It is found in the nucleus. Its subcellular location is the nucleus speckle. In terms of biological role, component of the 17S U2 SnRNP complex of the spliceosome, a large ribonucleoprotein complex that removes introns from transcribed pre-mRNAs. The 17S U2 SnRNP complex (1) directly participates in early spliceosome assembly and (2) mediates recognition of the intron branch site during pre-mRNA splicing by promoting the selection of the pre-mRNA branch-site adenosine, the nucleophile for the first step of splicing. Within the 17S U2 SnRNP complex, SF3B1 is part of the SF3B subcomplex, which is required for 'A' complex assembly formed by the stable binding of U2 snRNP to the branchpoint sequence in pre-mRNA. Sequence independent binding of SF3A and SF3B subcomplexes upstream of the branch site is essential, it may anchor U2 snRNP to the pre-mRNA. May also be involved in the assembly of the 'E' complex. Also acts as a component of the minor spliceosome, which is involved in the splicing of U12-type introns in pre-mRNAs. Together with other U2 snRNP complex components may also play a role in the selective processing of microRNAs (miRNAs) from the long primary miRNA transcript, pri-miR-17-92. In Homo sapiens (Human), this protein is Splicing factor 3B subunit 1.